The sequence spans 661 residues: FAST kinase domain-containing protein 3, mitochondrial (661 aa).

One can recognise an RAP domain in the interval 592–650 (VALCIDGPQRFCLDSKHLLGKEATKQRHLRLLGYQVVQLPYHELELLTSRLELVDYLQR).

Belongs to the FAST kinase family. As to expression, expression detected in spleen, testis, colon, heart, smooth muscle, kidney, brain, lung, liver, brown and white adipose tissue with highest expression in testis and smooth muscle.

It is found in the mitochondrion. Required for normal mitochondrial respiration. Increases steady-state levels and half-lives of a subset of mature mitochondrial mRNAs MT-ND2, MT-ND3, MT-CYTB, MT-CO2, and MT-ATP8/6. Promotes MT-CO1 mRNA translation and increases mitochondrial complex IV assembly and activity. This chain is FAST kinase domain-containing protein 3, mitochondrial (Fastkd3), found in Mus musculus (Mouse).